Here is a 162-residue protein sequence, read N- to C-terminus: Caveolin-2 (162 aa).

Over 1 to 86 (MGLETEKADV…FEMSKYVIYK (86 aa)) the chain is Cytoplasmic. Y19 is modified (phosphotyrosine; by SRC). S20 and S23 each carry phosphoserine. Position 27 is a phosphotyrosine; by SRC (Y27). Residues 87 to 107 (FLTVFLAIPLAFAAGILFATL) constitute an intramembrane region (helical). Residues 108-162 (SCLHIWIIMPFVKTCLMVLPSVQTIWKSVTDVVIAPLCTSVGRSFSSVSLQLSHD) are Cytoplasmic-facing.

The protein belongs to the caveolin family. In terms of assembly, monomer or homodimer. Interacts with CAV1; the interaction forms a stable heterooligomeric complex that is required for targeting to lipid rafts and for caveolae formation. Tyrosine phosphorylated forms do not form heterooligomers with the Tyr-19-phosphorylated form existing as a monomer or dimer, and the Tyr-27-form as a monomer only. Interacts (tyrosine phosphorylated form) with the SH2 domain-containing proteins, RASA1, NCK1 and SRC. Interacts (tyrosine phosphorylated form) with INSR, the interaction (Tyr-27-phosphorylated form) is increased on insulin stimulation. Interacts (Tyr-19 phosphorylated form) with MAPK1 (phosphorylated form); the interaction, promoted by insulin, leads to nuclear location and MAPK1 activation. Interacts with STAT3; the interaction is increased on insulin-induced tyrosine phosphorylation leading to STAT activation. Post-translationally, phosphorylated on serine and tyrosine residues. CAV1 promotes phosphorylation on Ser-23 which then targets the complex to the plasma membrane, lipid rafts and caveolae. Phosphorylation on both Tyr-19 and Tyr-27 is required for insulin-induced 'Ser-727' phosphorylation of STAT3 and its activation. Phosphorylation on Tyr-19 is required for insulin-induced phosphorylation of MAPK1 and DNA binding of STAT3. Tyrosine phosphorylation is induced by both EGF and insulin.

It localises to the nucleus. It is found in the cytoplasm. Its subcellular location is the golgi apparatus membrane. The protein resides in the cell membrane. The protein localises to the membrane. It localises to the caveola. In terms of biological role, may act as a scaffolding protein within caveolar membranes. Interacts directly with G-protein alpha subunits and can functionally regulate their activity. Acts as an accessory protein in conjunction with CAV1 in targeting to lipid rafts and driving caveolae formation. Positive regulator of cellular mitogenesis of the MAPK signaling pathway. Required for the insulin-stimulated nuclear translocation and activation of MAPK1 and STAT3, and the subsequent regulation of cell cycle progression. The chain is Caveolin-2 (CAV2) from Muntiacus muntjak (Barking deer).